A 417-amino-acid chain; its full sequence is D-galactonate dehydratase family member Dd703_0947 (417 aa).

H127 contributes to the substrate binding site. Y158 serves as the catalytic Proton donor/acceptor. Position 223 (D223) interacts with Mg(2+). The active-site Proton donor/acceptor is H225. Positions 249 and 275 each coordinate Mg(2+). Substrate is bound by residues E275, R296, H325, D329, and E352.

This sequence belongs to the mandelate racemase/muconate lactonizing enzyme family. GalD subfamily. It depends on Mg(2+) as a cofactor.

The enzyme catalyses D-mannonate = 2-dehydro-3-deoxy-D-gluconate + H2O. It carries out the reaction D-gluconate = 2-dehydro-3-deoxy-D-gluconate + H2O. Its function is as follows. Has low dehydratase activity with D-mannonate and D-gluconate, suggesting that these are not physiological substrates and that it has no significant role in the in vivo degradation of these compounds. Has no detectable activity with a panel of 70 other acid sugars (in vitro). The protein is D-galactonate dehydratase family member Dd703_0947 of Musicola paradisiaca (strain Ech703) (Dickeya paradisiaca).